The primary structure comprises 299 residues: Large ribosomal subunit protein eL22 (299 aa).

Disordered stretches follow at residues 1 to 142 (MAPT…AAPA) and 155 to 178 (VAKP…KKNV). 2 stretches are compositionally biased toward basic and acidic residues: residues 33 to 42 (GKVEKPKAEA) and 55 to 64 (KASEAAKDVK). 2 stretches are compositionally biased toward low complexity: residues 65-98 (AAAA…AAAA) and 105-142 (AAAA…AAPA).

This sequence belongs to the eukaryotic ribosomal protein eL22 family.

The polypeptide is Large ribosomal subunit protein eL22 (RpL22) (Drosophila melanogaster (Fruit fly)).